The primary structure comprises 344 residues: TATA box-binding protein-like 2 (344 aa).

A disordered region spans residues 78-143 (NKDRTVTGNK…SNQLSSETPN (66 aa)). Over residues 110 to 120 (GSGLNLNSNSS) the composition is skewed to low complexity. Over residues 134 to 143 (SNQLSSETPN) the composition is skewed to polar residues.

It belongs to the TBP family. As to quaternary structure, interacts with TAF3.

Its subcellular location is the cytoplasm. It localises to the nucleus. Functionally, transcription factor required in complex with TAF3 for the differentiation of myoblasts into myocytes. The complex replaces TFIID at specific promoters at an early stage in the differentiation process. In Rattus norvegicus (Rat), this protein is TATA box-binding protein-like 2.